An 891-amino-acid polypeptide reads, in one-letter code: Alanine--tRNA ligase (891 aa).

Histidine 574, histidine 578, cysteine 676, and histidine 680 together coordinate Zn(2+).

Belongs to the class-II aminoacyl-tRNA synthetase family. Zn(2+) serves as cofactor.

The protein resides in the cytoplasm. The catalysed reaction is tRNA(Ala) + L-alanine + ATP = L-alanyl-tRNA(Ala) + AMP + diphosphate. Its function is as follows. Catalyzes the attachment of alanine to tRNA(Ala) in a two-step reaction: alanine is first activated by ATP to form Ala-AMP and then transferred to the acceptor end of tRNA(Ala). Also edits incorrectly charged Ser-tRNA(Ala) and Gly-tRNA(Ala) via its editing domain. The chain is Alanine--tRNA ligase from Synechococcus sp. (strain WH7803).